A 421-amino-acid chain; its full sequence is UDP-N-acetylglucosamine 1-carboxyvinyltransferase (421 aa).

Residue K26–N27 participates in phosphoenolpyruvate binding. R96 contacts UDP-N-acetyl-alpha-D-glucosamine. D120 functions as the Proton donor in the catalytic mechanism. Residues D308 and V330 each coordinate UDP-N-acetyl-alpha-D-glucosamine.

The protein belongs to the EPSP synthase family. MurA subfamily.

It is found in the cytoplasm. It carries out the reaction phosphoenolpyruvate + UDP-N-acetyl-alpha-D-glucosamine = UDP-N-acetyl-3-O-(1-carboxyvinyl)-alpha-D-glucosamine + phosphate. Its pathway is cell wall biogenesis; peptidoglycan biosynthesis. Functionally, cell wall formation. Adds enolpyruvyl to UDP-N-acetylglucosamine. This chain is UDP-N-acetylglucosamine 1-carboxyvinyltransferase, found in Corynebacterium efficiens (strain DSM 44549 / YS-314 / AJ 12310 / JCM 11189 / NBRC 100395).